We begin with the raw amino-acid sequence, 337 residues long: C5a anaphylatoxin chemotactic receptor 2 (337 aa).

Residues 1 to 38 (MGNDSVSYEYGDYSDLSDRPVDCLDGACLAIDPLRVAP) lie on the Extracellular side of the membrane. An N-linked (GlcNAc...) asparagine glycan is attached at Asn-3. A helical transmembrane segment spans residues 39-61 (LPLYAAIFLVGVPGNAMVAWVAG). The Cytoplasmic portion of the chain corresponds to 62–72 (KVARRRVGATW). The chain crosses the membrane as a helical span at residues 73–95 (LLHLAVADLLCCLSLPILAVPIA). Residues 96–114 (RGGHWPYGAVGCRALPSII) are Extracellular-facing. A disulfide bridge connects residues Cys-107 and Cys-186. The chain crosses the membrane as a helical span at residues 115 to 137 (LLTMYASVLLLAALSADLCFLAL). Residues 138–149 (GPAWWSTVQRAC) are Cytoplasmic-facing. Residues 150-172 (GVQVACGAAWTLALLLTVPSAIY) form a helical membrane-spanning segment. Residues 173-202 (RRLHQEHFPARLQCVVDYGGSSSTENAVTA) are Extracellular-facing. The chain crosses the membrane as a helical span at residues 203-225 (IRFLFGFLGPLVAVASCHSALLC). Residues 226–237 (WAARRCRPLGTA) lie on the Cytoplasmic side of the membrane. Residues 238–260 (IVVGFFVCWAPYHLLGLVLTVAA) form a helical membrane-spanning segment. Over 261-274 (PNSALLARALRAEP) the chain is Extracellular. A helical membrane pass occupies residues 275 to 294 (LIVGLALAHSCLNPMLFLYF). Residues 295-337 (GRAQLRRSLPAACHWALRESQGQDESVDSKKSTSHDLVSEMEV) are Cytoplasmic-facing. Ser-320 is subject to Phosphoserine.

The protein belongs to the G-protein coupled receptor 1 family. As to quaternary structure, interacts with C3 (the anaphylatoxin peptide C3a and the adipogenic hormone ASP); the interaction occurs with higher affinity for ASP, enhancing the phosphorylation and activation of GPR77, recruitment of ARRB2 to the cell surface and endocytosis of GRP77. Frontal cortex, hippocampus, hypothalamus, pons and liver.

It localises to the cell membrane. Functionally, receptor for the chemotactic and inflammatory C3a, C4a and C5a anaphylatoxin peptides and also for their dearginated forms ASP/C3adesArg, C4adesArg and C5adesArg respectively. Couples weakly to G(i)-mediated signaling pathways. The chain is C5a anaphylatoxin chemotactic receptor 2 (C5AR2) from Homo sapiens (Human).